We begin with the raw amino-acid sequence, 638 residues long: Threonine--tRNA ligase (638 aa).

One can recognise a TGS domain in the interval 1–61 (MPVITLPDGS…DADAQLQIIT (61 aa)). The tract at residues 243–534 (DHRKIGKALN…LTEEFAGFFP (292 aa)) is catalytic. Residues C334, H385, and H511 each coordinate Zn(2+).

The protein belongs to the class-II aminoacyl-tRNA synthetase family. In terms of assembly, homodimer. Zn(2+) serves as cofactor.

It localises to the cytoplasm. It catalyses the reaction tRNA(Thr) + L-threonine + ATP = L-threonyl-tRNA(Thr) + AMP + diphosphate + H(+). Its function is as follows. Catalyzes the attachment of threonine to tRNA(Thr) in a two-step reaction: L-threonine is first activated by ATP to form Thr-AMP and then transferred to the acceptor end of tRNA(Thr). Also edits incorrectly charged L-seryl-tRNA(Thr). The chain is Threonine--tRNA ligase from Alteromonas mediterranea (strain DSM 17117 / CIP 110805 / LMG 28347 / Deep ecotype).